The following is a 172-amino-acid chain: uncharacterized protein (172 aa).

4 helical membrane-spanning segments follow: residues 46 to 66 (MFSI…FLYP), 76 to 96 (LLSL…VGLF), 104 to 124 (WKFL…LGWS), and 129 to 149 (FFYA…FTEI).

Its subcellular location is the endoplasmic reticulum membrane. This is an uncharacterized protein from Schizosaccharomyces pombe (strain 972 / ATCC 24843) (Fission yeast).